A 937-amino-acid polypeptide reads, in one-letter code: Putative leucine-rich repeat receptor-like serine/threonine-protein kinase At3g53590 (937 aa).

Residues 1 to 20 (MIPPNINVLIRSICINLVTS) form the signal peptide. Topologically, residues 21–547 (LPLNFAYIFI…LLAQTSGIRT (527 aa)) are extracellular. Asn50, Asn63, Asn90, and Asn114 each carry an N-linked (GlcNAc...) asparagine glycan. 8 LRR repeats span residues 102-126 (LLYL…IGRI), 127-150 (SSLK…LGNL), 152-173 (NLNR…SFGN), 174-198 (LRSI…LSKL), 200-222 (KLVH…LAQL), 223-249 (PSLT…HFSR), 251-270 (VKLS…LSRI), and 271-294 (ENLS…KLSD). Residues Asn162, Asn184, and Asn210 are each glycosylated (N-linked (GlcNAc...) asparagine). Asn272 and Asn295 each carry an N-linked (GlcNAc...) asparagine glycan. LRR repeat units lie at residues 296–316 (MTTI…SFSD), 317–341 (LNSL…IWQD), and 343–360 (SFEN…NFSD). Residues Asn327, Asn357, Asn370, Asn413, Asn499, and Asn516 are each glycosylated (N-linked (GlcNAc...) asparagine). The chain crosses the membrane as a helical span at residues 548–568 (IVWMMIVAGSVVAATVLSVTA). Residues 569–937 (TLLYVRKRRE…SGFFHAVKPR (369 aa)) are Cytoplasmic-facing. A Protein kinase domain is found at 614-886 (FDSSTLIGRG…SKVVKELEGI (273 aa)). Residues 620–628 (IGRGSYGKV) and Lys642 each bind ATP. Asp738 serves as the catalytic Proton acceptor.

This sequence belongs to the protein kinase superfamily. Ser/Thr protein kinase family.

It localises to the cell membrane. It carries out the reaction L-seryl-[protein] + ATP = O-phospho-L-seryl-[protein] + ADP + H(+). The catalysed reaction is L-threonyl-[protein] + ATP = O-phospho-L-threonyl-[protein] + ADP + H(+). The sequence is that of Putative leucine-rich repeat receptor-like serine/threonine-protein kinase At3g53590 from Arabidopsis thaliana (Mouse-ear cress).